The chain runs to 132 residues: Small ribosomal subunit protein uS8 (132 aa).

Belongs to the universal ribosomal protein uS8 family. Part of the 30S ribosomal subunit. Contacts proteins S5 and S12.

In terms of biological role, one of the primary rRNA binding proteins, it binds directly to 16S rRNA central domain where it helps coordinate assembly of the platform of the 30S subunit. The protein is Small ribosomal subunit protein uS8 of Leuconostoc mesenteroides subsp. mesenteroides (strain ATCC 8293 / DSM 20343 / BCRC 11652 / CCM 1803 / JCM 6124 / NCDO 523 / NBRC 100496 / NCIMB 8023 / NCTC 12954 / NRRL B-1118 / 37Y).